We begin with the raw amino-acid sequence, 270 residues long: Putative phosphoenolpyruvate synthase regulatory protein (270 aa).

150–157 (GVSRCGKT) contacts ADP.

It belongs to the pyruvate, phosphate/water dikinase regulatory protein family. PSRP subfamily.

It carries out the reaction [pyruvate, water dikinase] + ADP = [pyruvate, water dikinase]-phosphate + AMP + H(+). The catalysed reaction is [pyruvate, water dikinase]-phosphate + phosphate + H(+) = [pyruvate, water dikinase] + diphosphate. Bifunctional serine/threonine kinase and phosphorylase involved in the regulation of the phosphoenolpyruvate synthase (PEPS) by catalyzing its phosphorylation/dephosphorylation. The sequence is that of Putative phosphoenolpyruvate synthase regulatory protein from Aeromonas hydrophila subsp. hydrophila (strain ATCC 7966 / DSM 30187 / BCRC 13018 / CCUG 14551 / JCM 1027 / KCTC 2358 / NCIMB 9240 / NCTC 8049).